A 387-amino-acid polypeptide reads, in one-letter code: MAATLTWILLFVGLLAGLRDTKAQQTTLYPLVGRVFVHPLEHATFLRLPEHIAVPPTVRLTYQAHLQGHPDLPRWLRYTQRSPYSPGFLYGTPTPEDRGRQVIEVTAYNRDSFDTTRQRLLLLIEDPEGPRLPYQAEFLVRSHDVEEVLPSTPANRFLTALGGLWELGELQLLNITSALDRGGRVPLPIEGRKEGVYIKVGSATPFSTCLKMVASPDSYARCAQGQPPLLSCYDSLAPHFRVDWCNVSLVDKSVPEPLDEVPTPGDGILEHDPFFCPPTEATGRDFLADALVTLLVPLLVALLLTLLLAYIMCCRREGQLKRDMATSDIQMVHHCTIHGNTEELRQMAARREVPRPLSTLPMFNVRTGERLPPRVDSAQVPLILDQH.

The signal sequence occupies residues 1-23 (MAATLTWILLFVGLLAGLRDTKA). At 24-290 (QQTTLYPLVG…ATGRDFLADA (267 aa)) the chain is on the extracellular side. Residues Asn-174 and Asn-246 are each glycosylated (N-linked (GlcNAc...) asparagine). A helical membrane pass occupies residues 291-311 (LVTLLVPLLVALLLTLLLAYI). Residues 312 to 387 (MCCRREGQLK…AQVPLILDQH (76 aa)) are Cytoplasmic-facing. Ser-377 carries the phosphoserine modification.

This sequence belongs to the sarcoglycan alpha/epsilon family. In terms of assembly, interacts with the syntrophin SNTA1. Cross-link to form 2 major subcomplexes: one consisting of SGCB, SGCD and SGCG and the other consisting of SGCB and SGCD. The association between SGCB and SGCG is particularly strong while SGCA is loosely associated with the other sarcoglycans. As to expression, strongly expressed in skeletal and heart muscle.

Its subcellular location is the cell membrane. The protein resides in the sarcolemma. It is found in the cytoplasm. It localises to the cytoskeleton. Its function is as follows. Component of the sarcoglycan complex, a subcomplex of the dystrophin-glycoprotein complex which forms a link between the F-actin cytoskeleton and the extracellular matrix. This is Alpha-sarcoglycan (SGCA) from Mesocricetus auratus (Golden hamster).